The following is a 1014-amino-acid chain: Regulator of telomere elongation helicase 1 homolog (1014 aa).

One can recognise a Helicase ATP-binding domain in the interval 7–324 (AGIPVHFPFE…KEMLLELEKA (318 aa)). ATP is bound at residue 42–49 (SPTGTGKT). Residues cysteine 147, cysteine 165, cysteine 174, and cysteine 210 each coordinate [4Fe-4S] cluster. The DEAH box motif lies at 253-256 (DEAH). Position 873 is a phosphothreonine (threonine 873). Positions 891 to 917 (TDMVKTEPGTSNSCSYGNTSSSGSDSR) are disordered. Positions 899–917 (GTSNSCSYGNTSSSGSDSR) are enriched in low complexity.

This sequence belongs to the helicase family. RAD3/XPD subfamily.

The protein resides in the nucleus. It catalyses the reaction ATP + H2O = ADP + phosphate + H(+). In terms of biological role, a probable ATP-dependent DNA helicase implicated in DNA repair and the maintenance of genomic stability. Acts as an anti-recombinase to counteract toxic recombination and limit crossover during meiosis. Regulates meiotic recombination and crossover homeostasis by physically dissociating strand invasion events and thereby promotes noncrossover repair by meiotic synthesis dependent strand annealing (SDSA) as well as disassembly of D loop recombination intermediates. The polypeptide is Regulator of telomere elongation helicase 1 homolog (Drosophila mojavensis (Fruit fly)).